A 148-amino-acid polypeptide reads, in one-letter code: Antitoxin Xre (148 aa).

It belongs to the MbcA/ParS/Xre antitoxin family. In terms of assembly, homodimer. Forms a complex with cognate toxin Rse.

Its function is as follows. Antitoxin component of a type II toxin-antitoxin (TA) system. Neutralizes the NAD(+) depleting activity of cognate toxin Res. This chain is Antitoxin Xre, found in Photorhabdus laumondii subsp. laumondii (strain DSM 15139 / CIP 105565 / TT01) (Photorhabdus luminescens subsp. laumondii).